Here is a 481-residue protein sequence, read N- to C-terminus: MHMDYHSPYFFGYLLGLIHLLGIVAALHALFTVRTAQGAIAWAMPLLFIPYLTLIPYLIFGARSFYAYIKARRQANQEMHVAMANLNWRPWVEEALTARESESYTALRAMPKLGRMPCLANNQVKLLINGKATFDAIFAAIEKARDVVLVQFFIIHDDTLGKALQQLLLRKAAEGVQVFVLYDRVGSHALPSSYSQVLRDGGVQIHAFATRRGWFNRFQVNFRNHRKIVVVDGLLGFIGGHNVGDEYLGEHPQLSPWRDTHVQISGPVLACLQESFAEDWYWATRQLPPLILPDTYPDNGVLCQALASGPADPQETCSLFFLEAIHSATRRVWITSPYFIPDEAVFAALRLAVLRGVDVRVLIPSRPDHRIVYAASSLFAFEAVRAGVRMFRYQPGFLHQKVVLVDDDVSAIGSANLDNRSFRLNFEITLLTVDRGFADQVEHMLQEDFEQAREITAEDTQDTHRLQQLGMRIARLISPIL.

Transmembrane regions (helical) follow at residues 10–30 and 40–60; these read FFGYLLGLIHLLGIVAALHAL and IAWAMPLLFIPYLTLIPYLIF. PLD phosphodiesterase domains lie at 220-247 and 394-421; these read VNFRNHRKIVVVDGLLGFIGGHNVGDEY and QPGFLHQKVVLVDDDVSAIGSANLDNRS. Residues H225, K227, D232, H399, K401, and D406 contribute to the active site.

This sequence belongs to the phospholipase D family. Cardiolipin synthase subfamily. ClsA sub-subfamily.

It is found in the cell inner membrane. It carries out the reaction 2 a 1,2-diacyl-sn-glycero-3-phospho-(1'-sn-glycerol) = a cardiolipin + glycerol. In terms of biological role, catalyzes the reversible phosphatidyl group transfer from one phosphatidylglycerol molecule to another to form cardiolipin (CL) (diphosphatidylglycerol) and glycerol. The sequence is that of Cardiolipin synthase A from Pseudomonas putida (strain ATCC 47054 / DSM 6125 / CFBP 8728 / NCIMB 11950 / KT2440).